Here is a 226-residue protein sequence, read N- to C-terminus: dTTP/UTP pyrophosphatase (226 aa).

Aspartate 85 acts as the Proton acceptor in catalysis.

Belongs to the Maf family. YhdE subfamily. It depends on a divalent metal cation as a cofactor.

The protein localises to the cytoplasm. The enzyme catalyses dTTP + H2O = dTMP + diphosphate + H(+). The catalysed reaction is UTP + H2O = UMP + diphosphate + H(+). Its function is as follows. Nucleoside triphosphate pyrophosphatase that hydrolyzes dTTP and UTP. May have a dual role in cell division arrest and in preventing the incorporation of modified nucleotides into cellular nucleic acids. The protein is dTTP/UTP pyrophosphatase of Psychrobacter cryohalolentis (strain ATCC BAA-1226 / DSM 17306 / VKM B-2378 / K5).